Here is a 123-residue protein sequence, read N- to C-terminus: S-adenosylmethionine decarboxylase proenzyme 2 (123 aa).

Ser65 serves as the catalytic Schiff-base intermediate with substrate; via pyruvic acid. Ser65 is modified (pyruvic acid (Ser); by autocatalysis). The active-site Proton acceptor; for processing activity is the His70. Residue Cys85 is the Proton donor; for catalytic activity of the active site.

This sequence belongs to the prokaryotic AdoMetDC family. Type 1 subfamily. Heterotetramer of two alpha and two beta chains arranged as a dimer of alpha/beta heterodimers. Requires pyruvate as cofactor. Post-translationally, is synthesized initially as an inactive proenzyme. Formation of the active enzyme involves a self-maturation process in which the active site pyruvoyl group is generated from an internal serine residue via an autocatalytic post-translational modification. Two non-identical subunits are generated from the proenzyme in this reaction, and the pyruvate is formed at the N-terminus of the alpha chain, which is derived from the carboxyl end of the proenzyme. The post-translation cleavage follows an unusual pathway, termed non-hydrolytic serinolysis, in which the side chain hydroxyl group of the serine supplies its oxygen atom to form the C-terminus of the beta chain, while the remainder of the serine residue undergoes an oxidative deamination to produce ammonia and the pyruvoyl group blocking the N-terminus of the alpha chain.

The catalysed reaction is S-adenosyl-L-methionine + H(+) = S-adenosyl 3-(methylsulfanyl)propylamine + CO2. It participates in amine and polyamine biosynthesis; S-adenosylmethioninamine biosynthesis; S-adenosylmethioninamine from S-adenosyl-L-methionine: step 1/1. Its function is as follows. Catalyzes the decarboxylation of S-adenosylmethionine to S-adenosylmethioninamine (dcAdoMet), the propylamine donor required for the synthesis of the polyamines spermine and spermidine from the diamine putrescine. This chain is S-adenosylmethionine decarboxylase proenzyme 2, found in Bacillus cereus (strain ATCC 14579 / DSM 31 / CCUG 7414 / JCM 2152 / NBRC 15305 / NCIMB 9373 / NCTC 2599 / NRRL B-3711).